The primary structure comprises 333 residues: 3-isopropylmalate/3-methylmalate dehydrogenase (333 aa).

Substrate contacts are provided by Arg-81, Arg-91, Arg-112, and Asp-203. Residues Asp-203, Asp-227, and Asp-231 each coordinate Mg(2+). 260–272 (GSAPDIAGKKIAN) serves as a coordination point for NAD(+).

Belongs to the isocitrate and isopropylmalate dehydrogenases family. In terms of assembly, homotetramer. Requires Mg(2+) as cofactor. Mn(2+) serves as cofactor.

It is found in the cytoplasm. The catalysed reaction is (2R,3S)-3-isopropylmalate + NAD(+) = 4-methyl-2-oxopentanoate + CO2 + NADH. It carries out the reaction (2R,3S)-3-methylmalate + NAD(+) = 2-oxobutanoate + CO2 + NADH. The enzyme catalyses (R)-malate + NAD(+) = pyruvate + CO2 + NADH. It participates in amino-acid biosynthesis; L-leucine biosynthesis; L-leucine from 3-methyl-2-oxobutanoate: step 3/4. Its pathway is amino-acid biosynthesis; L-isoleucine biosynthesis; 2-oxobutanoate from pyruvate: step 3/3. In terms of biological role, catalyzes the oxidation of 3-carboxy-2-hydroxy-4-methylpentanoate (3-isopropylmalate) to 3-carboxy-4-methyl-2-oxopentanoate, which decarboxylates to 4-methyl-2-oxopentanoate (2-oxoisocaproate). Also catalyzes the oxidative decarboxylation of 3-methylmalate to 2-oxobutyrate, and that of D-malate to pyruvate. Cannot use NADP(+) instead of NAD(+). Cannot catalyze the oxidation of L-malate, L-tartrate, D-tartrate, DL-isocitrate, or DL-lactate. The chain is 3-isopropylmalate/3-methylmalate dehydrogenase (leuB) from Methanocaldococcus jannaschii (strain ATCC 43067 / DSM 2661 / JAL-1 / JCM 10045 / NBRC 100440) (Methanococcus jannaschii).